Here is a 322-residue protein sequence, read N- to C-terminus: Nuclease 1, mitochondrial (322 aa).

His-142 functions as the Proton acceptor in the catalytic mechanism. Asn-174 serves as a coordination point for Mg(2+).

This sequence belongs to the DNA/RNA non-specific endonuclease family. Homodimer. Requires Mn(2+) as cofactor. Mg(2+) is required as a cofactor.

The protein resides in the mitochondrion inner membrane. Its function is as follows. This enzyme has both RNase and DNase activity. It degrades single-stranded DNA and RNA. The chain is Nuclease 1, mitochondrial (pnu1) from Schizosaccharomyces pombe (strain 972 / ATCC 24843) (Fission yeast).